Here is a 390-residue protein sequence, read N- to C-terminus: Pyruvate dehydrogenase E1 component subunit alpha-1, mitochondrial (390 aa).

Residues 1 to 15 (MAAAILLRRVPPARA) constitute a mitochondrion transit peptide. 10 residues coordinate pyruvate: H91, Y117, R118, G166, V168, D197, G198, A199, N226, and Y228. Y117, R118, G166, V168, D197, G198, A199, and N226 together coordinate thiamine diphosphate. D197 serves as a coordination point for Mg(2+). Residues N226 and Y228 each contribute to the Mg(2+) site. H292 contributes to the thiamine diphosphate binding site. The segment at 293–312 (SMSDPGSTYRTRDEISGVRQ) is disordered. Residues 302–312 (RTRDEISGVRQ) are compositionally biased toward basic and acidic residues.

Tetramer of 2 alpha and 2 beta subunits. It depends on thiamine diphosphate as a cofactor. Mg(2+) is required as a cofactor.

It is found in the mitochondrion matrix. It catalyses the reaction N(6)-[(R)-lipoyl]-L-lysyl-[protein] + pyruvate + H(+) = N(6)-[(R)-S(8)-acetyldihydrolipoyl]-L-lysyl-[protein] + CO2. Functionally, the pyruvate dehydrogenase complex catalyzes the overall conversion of pyruvate to acetyl-CoA and CO(2). It contains multiple copies of three enzymatic components: pyruvate dehydrogenase (E1), dihydrolipoamide acetyltransferase (E2) and lipoamide dehydrogenase (E3). The protein is Pyruvate dehydrogenase E1 component subunit alpha-1, mitochondrial of Oryza sativa subsp. japonica (Rice).